Consider the following 603-residue polypeptide: Arginine--tRNA ligase (603 aa).

The 'HIGH' region motif lies at 143–153 (PNIAKEMHVGH).

Belongs to the class-I aminoacyl-tRNA synthetase family. In terms of assembly, monomer.

The protein localises to the cytoplasm. It carries out the reaction tRNA(Arg) + L-arginine + ATP = L-arginyl-tRNA(Arg) + AMP + diphosphate. In Prochlorococcus marinus (strain SARG / CCMP1375 / SS120), this protein is Arginine--tRNA ligase.